A 490-amino-acid chain; its full sequence is 23S rRNA (uracil(1939)-C(5))-methyltransferase RlmD (490 aa).

Positions 14 to 75 constitute a TRAM domain; the sequence is APAPAEYPID…SSFEKATLTA (62 aa). [4Fe-4S] cluster is bound by residues C88, C98, C101, and C180. 6 residues coordinate S-adenosyl-L-methionine: Q289, F318, N323, E339, N374, and D395. C446 (nucleophile) is an active-site residue.

The protein belongs to the class I-like SAM-binding methyltransferase superfamily. RNA M5U methyltransferase family. RlmD subfamily.

The catalysed reaction is uridine(1939) in 23S rRNA + S-adenosyl-L-methionine = 5-methyluridine(1939) in 23S rRNA + S-adenosyl-L-homocysteine + H(+). Its function is as follows. Catalyzes the formation of 5-methyl-uridine at position 1939 (m5U1939) in 23S rRNA. In Polaromonas naphthalenivorans (strain CJ2), this protein is 23S rRNA (uracil(1939)-C(5))-methyltransferase RlmD.